Consider the following 264-residue polypeptide: S-methyl-5'-thioadenosine phosphorylase (264 aa).

Phosphate is bound by residues Ser-14 and Arg-55–His-56. Met-180 provides a ligand contact to substrate. Thr-181 contacts phosphate. Asp-204–Asp-206 provides a ligand contact to substrate.

This sequence belongs to the PNP/MTAP phosphorylase family. MTAP subfamily. As to quaternary structure, homodimer.

It catalyses the reaction S-methyl-5'-thioadenosine + phosphate = 5-(methylsulfanyl)-alpha-D-ribose 1-phosphate + adenine. It functions in the pathway amino-acid biosynthesis; L-methionine biosynthesis via salvage pathway; S-methyl-5-thio-alpha-D-ribose 1-phosphate from S-methyl-5'-thioadenosine (phosphorylase route): step 1/1. With respect to regulation, not inhibited by adenosine, potently inhibited by MT-DADMe-immucillin A. Catalyzes the reversible phosphorylation of S-methyl-5'-thioadenosine (MTA) to adenine and 5-methylthioribose-1-phosphate. Involved in the breakdown of MTA, a major by-product of polyamine biosynthesis. Responsible for the first step in the methionine salvage pathway after MTA has been generated from S-adenosylmethionine. Prefers MTA, with 2% activity on adenosine, 0.8% activity on S-adenosyl-L-homocysteine and no activity on other tested nucleosides. This is S-methyl-5'-thioadenosine phosphorylase from Mycobacterium tuberculosis (strain ATCC 25618 / H37Rv).